Here is a 101-residue protein sequence, read N- to C-terminus: Integration host factor subunit alpha (101 aa).

This sequence belongs to the bacterial histone-like protein family. In terms of assembly, heterodimer of an alpha and a beta chain.

In terms of biological role, this protein is one of the two subunits of integration host factor, a specific DNA-binding protein that functions in genetic recombination as well as in transcriptional and translational control. This is Integration host factor subunit alpha from Dinoroseobacter shibae (strain DSM 16493 / NCIMB 14021 / DFL 12).